A 251-amino-acid polypeptide reads, in one-letter code: Triosephosphate isomerase (251 aa).

9 to 11 contacts substrate; that stretch reads NWK. Catalysis depends on His96, which acts as the Electrophile. Glu167 acts as the Proton acceptor in catalysis. Residues Gly173, Ser213, and 234–235 each bind substrate; that span reads GG.

Belongs to the triosephosphate isomerase family. As to quaternary structure, homodimer.

It localises to the cytoplasm. It carries out the reaction D-glyceraldehyde 3-phosphate = dihydroxyacetone phosphate. It participates in carbohydrate biosynthesis; gluconeogenesis. Its pathway is carbohydrate degradation; glycolysis; D-glyceraldehyde 3-phosphate from glycerone phosphate: step 1/1. Involved in the gluconeogenesis. Catalyzes stereospecifically the conversion of dihydroxyacetone phosphate (DHAP) to D-glyceraldehyde-3-phosphate (G3P). This Phocaeicola vulgatus (strain ATCC 8482 / DSM 1447 / JCM 5826 / CCUG 4940 / NBRC 14291 / NCTC 11154) (Bacteroides vulgatus) protein is Triosephosphate isomerase.